A 118-amino-acid polypeptide reads, in one-letter code: Group 1 truncated hemoglobin GlbN (118 aa).

Residue His-70 participates in heme binding.

Belongs to the truncated hemoglobin family. Group I subfamily. Monomer. Requires heme as cofactor.

Its subcellular location is the membrane. The protein is Group 1 truncated hemoglobin GlbN (glbN) of Nostoc sp. (strain MUN 8820).